Consider the following 418-residue polypeptide: Glutamyl-tRNA reductase (418 aa).

Residues 49 to 52 (TCNR), Ser-109, 114 to 116 (EPQ), and Gln-120 contribute to the substrate site. Cys-50 serves as the catalytic Nucleophile. Residue 189 to 194 (GAGETI) participates in NADP(+) binding.

Belongs to the glutamyl-tRNA reductase family. In terms of assembly, homodimer.

The catalysed reaction is (S)-4-amino-5-oxopentanoate + tRNA(Glu) + NADP(+) = L-glutamyl-tRNA(Glu) + NADPH + H(+). The protein operates within porphyrin-containing compound metabolism; protoporphyrin-IX biosynthesis; 5-aminolevulinate from L-glutamyl-tRNA(Glu): step 1/2. In terms of biological role, catalyzes the NADPH-dependent reduction of glutamyl-tRNA(Glu) to glutamate 1-semialdehyde (GSA). This chain is Glutamyl-tRNA reductase, found in Escherichia coli O1:K1 / APEC.